The chain runs to 488 residues: Inosine-5'-monophosphate dehydrogenase (488 aa).

2 consecutive CBS domains span residues 93-149 (VVTD…NQPV) and 153-214 (MTPK…CKDE). NAD(+) is bound by residues aspartate 248 and 248-250 (DSS). N6-acetyllysine is present on lysine 267. 298–300 (GIG) is an NAD(+) binding site. 2 residues coordinate K(+): glycine 300 and glycine 302. An IMP-binding site is contributed by serine 303. Cysteine 305 is a binding site for K(+). Cysteine 305 serves as the catalytic Thioimidate intermediate. Residues 338–340 (DGG), 361–362 (GS), and 385–389 (YRGMG) each bind IMP. Arginine 401 serves as the catalytic Proton acceptor. IMP is bound at residue glutamate 415. An N6-acetyllysine modification is found at lysine 428. Residues glutamate 469, serine 470, and histidine 471 each contribute to the K(+) site.

This sequence belongs to the IMPDH/GMPR family. In terms of assembly, homotetramer. Requires K(+) as cofactor.

It catalyses the reaction IMP + NAD(+) + H2O = XMP + NADH + H(+). It participates in purine metabolism; XMP biosynthesis via de novo pathway; XMP from IMP: step 1/1. Its activity is regulated as follows. Mycophenolic acid (MPA) is a non-competitive inhibitor that prevents formation of the closed enzyme conformation by binding to the same site as the amobile flap. In contrast, mizoribine monophosphate (MZP) is a competitive inhibitor that induces the closed conformation. MPA is a potent inhibitor of mammalian IMPDHs but a poor inhibitor of the bacterial enzymes. MZP is a more potent inhibitor of bacterial IMPDH. In terms of biological role, catalyzes the conversion of inosine 5'-phosphate (IMP) to xanthosine 5'-phosphate (XMP), the first committed and rate-limiting step in the de novo synthesis of guanine nucleotides, and therefore plays an important role in the regulation of cell growth. This chain is Inosine-5'-monophosphate dehydrogenase, found in Escherichia coli O157:H7.